A 393-amino-acid chain; its full sequence is Elongation factor Tu (393 aa).

Residues 6–204 enclose the tr-type G domain; sequence KPHINVGTIG…ALEKIELPVR (199 aa). A G1 region spans residues 15 to 22; the sequence is GHVDHGKT. 15–22 contributes to the GTP binding site; it reads GHVDHGKT. Thr-22 provides a ligand contact to Mg(2+). A G2 region spans residues 58–62; it reads GITIS. A G3 region spans residues 79–82; that stretch reads DCPG. Residues 79–83 and 134–137 each bind GTP; these read DCPGH and NKCD. The tract at residues 134 to 137 is G4; that stretch reads NKCD. The interval 172-174 is G5; the sequence is SAV.

It belongs to the TRAFAC class translation factor GTPase superfamily. Classic translation factor GTPase family. EF-Tu/EF-1A subfamily. In terms of assembly, monomer.

The protein resides in the cytoplasm. It carries out the reaction GTP + H2O = GDP + phosphate + H(+). Its function is as follows. GTP hydrolase that promotes the GTP-dependent binding of aminoacyl-tRNA to the A-site of ribosomes during protein biosynthesis. This is Elongation factor Tu from Anaplasma marginale (strain St. Maries).